The primary structure comprises 695 residues: Testis-specific Y-encoded-like protein 2 (695 aa).

Positions M1–Q56 are disordered. K11 participates in a covalent cross-link: Glycyl lysine isopeptide (Lys-Gly) (interchain with G-Cter in SUMO2). S18 and S20 each carry phosphoserine. The span at R23–Q44 shows a compositional bias: pro residues. Residues K163 and K165 each participate in a glycyl lysine isopeptide (Lys-Gly) (interchain with G-Cter in SUMO2) cross-link. Residues E175 to R207 form a disordered region. Residues S185–R202 are compositionally biased toward basic residues. T340 carries the phosphothreonine modification. Disordered stretches follow at residues D471 to E603 and V632 to G695. Positions S481–T491 are enriched in basic and acidic residues. Over residues E496 to E518 the composition is skewed to acidic residues. Basic and acidic residues predominate over residues D519 to K535. A compositionally biased stretch (low complexity) spans G539–S557. 2 stretches are compositionally biased toward acidic residues: residues S558–D601 and V632–D677. Residues S670 and S673 each carry the phosphoserine modification.

This sequence belongs to the nucleosome assembly protein (NAP) family. As to quaternary structure, interacts with histones. Interacts with CASK. Part of a complex containing CASK, TBR1 and TSPYL2. In terms of processing, phosphorylation at Ser-20 and/or Thr-340 impairs function on cell proliferation. In terms of tissue distribution, ubiquitously expressed, with highest levels in testis, adrenal gland, cerebral cortex, ovary, skeletal muscle and spleen. Present in testis, adrenal gland, cerebral cortex and ovary (at protein level).

The protein resides in the nucleus. It localises to the cytoplasm. In terms of biological role, part of the CASK/TBR1/TSPYL2 transcriptional complex which modulates gene expression in response to neuronal synaptic activity, probably by facilitating nucleosome assembly. May inhibit cell proliferation by inducing p53-dependent CDKN1A expression. This is Testis-specific Y-encoded-like protein 2 (TSPYL2) from Macaca fascicularis (Crab-eating macaque).